A 478-amino-acid chain; its full sequence is Trigger factor (478 aa).

Positions 162-243 (GDFVSIDLSA…VKSIKERELP (82 aa)) constitute a PPIase FKBP-type domain. A disordered region spans residues 424–478 (KDTDGNDIDTTEFFGPSGGAQAEAEGADEADADSDADSDTEADSDTEADEADEAK). Residues 448–478 (EGADEADADSDADSDTEADSDTEADEADEAK) show a composition bias toward acidic residues.

It belongs to the FKBP-type PPIase family. Tig subfamily.

The protein resides in the cytoplasm. The enzyme catalyses [protein]-peptidylproline (omega=180) = [protein]-peptidylproline (omega=0). In terms of biological role, involved in protein export. Acts as a chaperone by maintaining the newly synthesized protein in an open conformation. Functions as a peptidyl-prolyl cis-trans isomerase. The protein is Trigger factor of Mycobacterium sp. (strain KMS).